The chain runs to 399 residues: Type II secretion system protein L (399 aa).

At 1 to 247 (MSKAENTSGK…VKPWKQALLP (247 aa)) the chain is on the cytoplasmic side. A helical membrane pass occupies residues 248–264 (WRNVLIALSAWLLLVLG). The Periplasmic segment spans residues 265 to 399 (ESVWTHYQWY…EGQLTLRSQP (135 aa)).

It belongs to the GSP L family. As to quaternary structure, type II secretion system is composed of four main components: the outer membrane complex, the inner membrane complex, the cytoplasmic secretion ATPase and the periplasm-spanning pseudopilus. Forms homodimers. Interacts with OutM/GspM. Interacts with OutE/GspE and OutF/GspF.

The protein resides in the cell inner membrane. In terms of biological role, inner membrane component of the type II secretion system required for the energy-dependent secretion of extracellular factors such as proteases and toxins from the periplasm. Plays a role in the complex assembly and recruits OutM resulting in a stable complex in the inner membrane. Provides thus a link between the energy-providing OutE protein in the cytoplasm and the rest of the T2SS machinery. This chain is Type II secretion system protein L (outL), found in Dickeya chrysanthemi (Pectobacterium chrysanthemi).